Here is a 243-residue protein sequence, read N- to C-terminus: Membrane selenoprotein (243 aa).

A disordered region spans residues 12 to 63; the sequence is GEDCEGGVUARPSSSSSSINNASDESTPLISKTNDEEKANIGISSTSNSPQE. U20 is a non-standard amino acid (selenocysteine). 2 stretches are compositionally biased toward polar residues: residues 30-43 and 53-63; these read INNA…LISK and GISSTSNSPQE. Helical transmembrane passes span 74–94, 102–122, 144–164, and 199–219; these read ILTL…PVLI, VSAG…LSIL, IKFG…FDIL, and VMGW…LLVG. Position 88 (U88) is a non-standard amino acid, selenocysteine.

The protein resides in the membrane. This chain is Membrane selenoprotein (msp), found in Dictyostelium discoideum (Social amoeba).